A 211-amino-acid chain; its full sequence is HTH-type transcriptional repressor FabR (211 aa).

Residues 10 to 70 (RTRRSLIEAA…TMVDESGLML (61 aa)) enclose the HTH tetR-type domain. Residues 33–52 (SLREVSREAGIAPTSFYRHF) constitute a DNA-binding region (H-T-H motif).

Homodimer.

Its subcellular location is the cytoplasm. Functionally, represses the transcription of fabB, involved in unsaturated fatty acid (UFA) biosynthesis. By controlling UFA production, FabR directly influences the physical properties of the membrane bilayer. This chain is HTH-type transcriptional repressor FabR, found in Yersinia pseudotuberculosis serotype O:1b (strain IP 31758).